The following is a 492-amino-acid chain: Spindle assembly abnormal protein 6 (492 aa).

One can recognise a PISA domain in the interval 46-98; that stretch reads SGEKELKFEISRSDDFEFLFSETLNNEKYQILARDHDLTVDFDAFPKVIIQHL. The stretch at 192–407 forms a coiled coil; sequence KSADELASLR…KIAHYRAQRF (216 aa).

In terms of assembly, nine homodimers form a cartwheel structure with an internal diameter of 23 nM and radial spokes connecting to the microtubule triplets. Interacts with sas-5.

The protein resides in the cytoplasm. It localises to the cytoskeleton. Its subcellular location is the microtubule organizing center. It is found in the centrosome. The protein localises to the centriole. In terms of biological role, central scaffolding component of the centrioles ensuring their 9-fold symmetry. Required for centrosome biogenesis and duplication. In Caenorhabditis elegans, this protein is Spindle assembly abnormal protein 6.